We begin with the raw amino-acid sequence, 92 residues long: Small ribosomal subunit protein uS19 (92 aa).

This sequence belongs to the universal ribosomal protein uS19 family.

Functionally, protein S19 forms a complex with S13 that binds strongly to the 16S ribosomal RNA. The protein is Small ribosomal subunit protein uS19 of Rickettsia typhi (strain ATCC VR-144 / Wilmington).